Here is a 35-residue protein sequence, read N- to C-terminus: uncharacterized protein (35 aa).

This is an uncharacterized protein from Archaeoglobus fulgidus (strain ATCC 49558 / DSM 4304 / JCM 9628 / NBRC 100126 / VC-16).